The chain runs to 644 residues: MSEMIRITFPDGAVKEFPKGTTTEQIAASISPGLKKKAIAGKLNDRFIDLRTPIQEDGSISIITQDMPEALDILRHSTAHLMAQAIKRLYKNVKLGVGPVIENGFYYDIDMEESLTPEDLPKIEQEMRKIVKENLEIVRKEVSREEAIRLYEEIGDDLKLELINDIPEGETISIYEQGEFFDLCRGVHVPSTGKIKEFKLLNISGAYWRGDSNNKMLQRIYGTAFFKKEDLDEYLRQLQEAKERDHRKLGKELELFMTSQKVGQGLPLWLPKGATIRRIIERYIVDKEIELGYQHVYTPVLGSVELYKTSGHWDHYKDNMFPPMEMDNEQLVLRPMNCPHHMMIYKSKIHSYRELPIRIAELGTMHRYEMSGALSGLQRVRGMTLNDAHIFVRPDQIKDEFKRVVNLILEVYKDFGLDEYSFRLSYRDPHDKEKYYDDDEMWEKAQNMLREAMDELGLEYYEAEGEAAFYGPKLDVQVRTALGKDETLSTVQLDFLLPERFDLTYIGEDGKPHRPVVIHRGVVSTMERFVAFLIEEYKGAFPTWLAPVQVEVIPVSPAAHLDYAYKVKEALQSQGFRVEVDERDEKIGYKIREAQIQKIPYMLVVGDKEMAENAVNVRKYGEQKSETMSLDDFIAALKAEVRRN.

In terms of domain architecture, TGS spans 3-64 (EMIRITFPDG…QEDGSISIIT (62 aa)). Residues 245–542 (DHRKLGKELE…LIEEYKGAFP (298 aa)) are catalytic. Residues Cys-338, His-389, and His-519 each contribute to the Zn(2+) site.

It belongs to the class-II aminoacyl-tRNA synthetase family. In terms of assembly, homodimer. Zn(2+) serves as cofactor.

It localises to the cytoplasm. It carries out the reaction tRNA(Thr) + L-threonine + ATP = L-threonyl-tRNA(Thr) + AMP + diphosphate + H(+). Catalyzes the attachment of threonine to tRNA(Thr) in a two-step reaction: L-threonine is first activated by ATP to form Thr-AMP and then transferred to the acceptor end of tRNA(Thr). Also edits incorrectly charged L-seryl-tRNA(Thr). In Geobacillus sp. (strain WCH70), this protein is Threonine--tRNA ligase.